The chain runs to 848 residues: Trimethylamine-N-oxide reductase 1 (848 aa).

Residues 1–39 (MNNNDLFQASRRRFLAQLGGLTVAGMLGPSLLTSRRATA) constitute a signal peptide (tat-type signal). Residue Ser-191 participates in Mo-bis(molybdopterin guanine dinucleotide) binding.

The protein belongs to the prokaryotic molybdopterin-containing oxidoreductase family. Interacts with the N-terminal domain of TorC. The cofactor is Mo-bis(molybdopterin guanine dinucleotide). In terms of processing, predicted to be exported by the Tat system. The position of the signal peptide cleavage has not been experimentally proven.

It is found in the periplasm. It carries out the reaction trimethylamine + 2 Fe(III)-[cytochrome c] + H2O = trimethylamine N-oxide + 2 Fe(II)-[cytochrome c] + 3 H(+). In terms of biological role, reduces trimethylamine-N-oxide (TMAO) into trimethylamine; an anaerobic reaction coupled to energy-yielding reactions. This is Trimethylamine-N-oxide reductase 1 (torA) from Escherichia coli O157:H7.